A 726-amino-acid polypeptide reads, in one-letter code: Dipeptidyl-peptidase 5 (726 aa).

Residues 1–19 form the signal peptide; that stretch reads MAAAKWLIASLAFASSGLA. Asn-96 and Asn-252 each carry an N-linked (GlcNAc...) asparagine glycan. Residues 269-291 form a disordered region; that stretch reads AEPINKRNGPRTPQGIEGASSSP. The Charge relay system role is filled by Ser-558. Asn-605 carries an N-linked (GlcNAc...) asparagine glycan. Active-site charge relay system residues include Asp-641 and His-673. The N-linked (GlcNAc...) asparagine glycan is linked to Asn-699.

This sequence belongs to the peptidase S9C family.

The protein localises to the secreted. The protein is Dipeptidyl-peptidase 5 (DPPV) of Arthroderma benhamiae (Trichophyton mentagrophytes).